Here is a 331-residue protein sequence, read N- to C-terminus: DNA-directed RNA polymerase subunit alpha (331 aa).

The segment at 1 to 223 is alpha N-terminal domain (alpha-NTD); the sequence is MDQKRPQLKA…DELTVFGNVE (223 aa). The segment at 260–331 is alpha C-terminal domain (alpha-CTD); that stretch reads PYPADLDTPR…LAQFGLALRD (72 aa).

It belongs to the RNA polymerase alpha chain family. As to quaternary structure, homodimer. The RNAP catalytic core consists of 2 alpha, 1 beta, 1 beta' and 1 omega subunit. When a sigma factor is associated with the core the holoenzyme is formed, which can initiate transcription.

It catalyses the reaction RNA(n) + a ribonucleoside 5'-triphosphate = RNA(n+1) + diphosphate. In terms of biological role, DNA-dependent RNA polymerase catalyzes the transcription of DNA into RNA using the four ribonucleoside triphosphates as substrates. The polypeptide is DNA-directed RNA polymerase subunit alpha (Deinococcus geothermalis (strain DSM 11300 / CIP 105573 / AG-3a)).